The following is a 284-amino-acid chain: L-ribulose-5-phosphate 3-epimerase UlaE (284 aa).

The protein belongs to the L-ribulose-5-phosphate 3-epimerase family.

It carries out the reaction L-ribulose 5-phosphate = L-xylulose 5-phosphate. It functions in the pathway cofactor degradation; L-ascorbate degradation; D-xylulose 5-phosphate from L-ascorbate: step 3/4. Its function is as follows. Catalyzes the isomerization of L-xylulose-5-phosphate to L-ribulose-5-phosphate. Is involved in the anaerobic L-ascorbate utilization. The sequence is that of L-ribulose-5-phosphate 3-epimerase UlaE from Escherichia coli (strain ATCC 8739 / DSM 1576 / NBRC 3972 / NCIMB 8545 / WDCM 00012 / Crooks).